The chain runs to 687 residues: Geranylgeranyl transferase type-2 subunit alpha 2 (687 aa).

PFTA repeat units lie at residues 38-72, 83-117, 132-167, 168-203, and 214-248; these read YTKE…SRLD, IIDE…KKGH, YQKQ…LTKT, SEED…SLVA, and TIRR…QTVK. LRR repeat units lie at residues 523–545, 546–567, 568–591, 592–616, and 646–668; these read MNNI…VEKL, LFVQ…LEAM, QLLC…SLRH, LKQL…TTRY, and LMKL…EFSS.

It belongs to the protein prenyltransferase subunit alpha family. In terms of assembly, heterotrimer composed of the alpha subunit RGTA, the beta subunit RGTB and REP; within this trimer, RGTA and RGTB form the catalytic component, while REP mediates peptide substrate binding.

The catalysed reaction is geranylgeranyl diphosphate + L-cysteinyl-[protein] = S-geranylgeranyl-L-cysteinyl-[protein] + diphosphate. Its activity is regulated as follows. The enzymatic reaction requires the aid of the Rab escort protein REP. Catalyzes the transfer of a geranylgeranyl moiety from geranylgeranyl diphosphate to both cysteines of Rab proteins with the C-terminal sequence -CCXX, CXXX, -XCCX and -XCXC, such as RABA1A, RABA2A, RABF2A and RABG2. Does not seem to be a functional Rab-GGT alpha subunit in vitro. The sequence is that of Geranylgeranyl transferase type-2 subunit alpha 2 from Arabidopsis thaliana (Mouse-ear cress).